A 239-amino-acid chain; its full sequence is Ribonuclease P protein component 3 (239 aa).

The protein belongs to the eukaryotic/archaeal RNase P protein component 3 family. Consists of a catalytic RNA component and at least 4-5 protein subunits.

It localises to the cytoplasm. The catalysed reaction is Endonucleolytic cleavage of RNA, removing 5'-extranucleotides from tRNA precursor.. Part of ribonuclease P, a protein complex that generates mature tRNA molecules by cleaving their 5'-ends. The polypeptide is Ribonuclease P protein component 3 (Methanosarcina barkeri (strain Fusaro / DSM 804)).